The primary structure comprises 104 residues: Protamine-3 (104 aa).

Positions Met1 to Ser104 are disordered. Over residues Glu45 to Gln70 the composition is skewed to acidic residues. Position 96 is a phosphoserine (Ser96).

The protein belongs to the protamine P3 family. In terms of tissue distribution, testis.

It is found in the nucleus. It localises to the chromosome. Protamines substitute for histones in the chromatin of sperm during the haploid phase of spermatogenesis. They compact sperm DNA into a highly condensed, stable and inactive complex. The polypeptide is Protamine-3 (Prm3) (Rattus norvegicus (Rat)).